The following is a 347-amino-acid chain: UDP-N-acetylenolpyruvoylglucosamine reductase (347 aa).

The region spanning 24-195 (FDARARVAAR…VAVTFRLPKA (172 aa)) is the FAD-binding PCMH-type domain. The active site involves Arg171. Ser247 serves as the catalytic Proton donor. Glu343 is an active-site residue.

Belongs to the MurB family. Requires FAD as cofactor.

It is found in the cytoplasm. The catalysed reaction is UDP-N-acetyl-alpha-D-muramate + NADP(+) = UDP-N-acetyl-3-O-(1-carboxyvinyl)-alpha-D-glucosamine + NADPH + H(+). It functions in the pathway cell wall biogenesis; peptidoglycan biosynthesis. Cell wall formation. This Burkholderia pseudomallei (strain 668) protein is UDP-N-acetylenolpyruvoylglucosamine reductase.